A 153-amino-acid polypeptide reads, in one-letter code: Calmodulin-like protein 3 (153 aa).

4 consecutive EF-hand domains span residues 1–36, 37–72, 74–109, and 112–147; these read MDQAELARIFQMFDRNGDGKITKQELNDSLENLGIY, IPDKDLVQMIEKIDLNGDGYVDIEEFGGLYQTIMEE, DEEEDMREAFNVFDQNRDGFITVEELRSVLASLGLK, and RTLEDCKRMISKVDVDGDGMVNFKEFKQMMKGGGFA. 19 residues coordinate Ca(2+): Asp14, Asn16, Asp18, Lys20, Glu25, Asp50, Asn52, Asp54, Tyr56, Glu61, Asp87, Asn89, Asp91, Glu98, Asp125, Asp127, Asp129, Met131, and Glu136.

This sequence belongs to the calmodulin family.

In terms of biological role, potential calcium sensor. This is Calmodulin-like protein 3 (CML3) from Arabidopsis thaliana (Mouse-ear cress).